Reading from the N-terminus, the 510-residue chain is MFVEKVLERTTNLELCSILILLVISLSIYTFYATLNTYLRSVLLSLRLTGPPSLPFLGNCMLVTDKDLMRRCAGKAFDLYGSLVRIWVLLFPFFAVLEPEDLQVILSSKKHTNKVFFYRLMHNFLGDGLITSSGSKWSNHRRLIQPAFHHNLLEKFIDTFVDASQSLYENLDAEAVGTEINIAKYVNNCVLDILNEAVLGVPIKKRGQDVAMMEDSPFRQGKIMMPARFTQPWLLLDGIYHWTKMANDELNQKKRLNDFTRKMIQRRRQIQNNNNGNSERKCLLDHMIEISESNRDFTEEDIVNEACTFMLAGQDSVGAAVAFTLFLLTQNPECQDRCVLELATIFEDSNRAPTMTDLHEMRYMEMCIKEALRLYPSVPLIARKLGEEVRLAKHTLPAGSNVFICPYATHRLAHIYPDPEKFQPERFSPENSENRHPYAFLPFSAGPRYCIGNRFAIMEIKTIVSRLLRSYQLLPVTGKTTIAATFRITLRASGGLWVRLKERDHPLIAH.

Position 450 (Cys-450) interacts with heme.

The protein belongs to the cytochrome P450 family. The cofactor is heme.

The protein localises to the endoplasmic reticulum membrane. Its subcellular location is the microsome membrane. In terms of biological role, may be involved in the metabolism of insect hormones and in the breakdown of synthetic insecticides. In Drosophila melanogaster (Fruit fly), this protein is Probable cytochrome P450 4aa1 (Cyp4aa1).